A 357-amino-acid chain; its full sequence is Olfactory receptor 2B2 (357 aa).

Topologically, residues 1 to 25 are extracellular; it reads MNWVNKSVPQEFILLVFSDQPWLEI. N-linked (GlcNAc...) asparagine glycosylation is present at N5. A helical membrane pass occupies residues 26-49; that stretch reads PPFVMFLFSYILTIFGNLTIILVS. At 50 to 57 the chain is on the cytoplasmic side; the sequence is HVDFKLHT. Residues 58-79 form a helical membrane-spanning segment; it reads PMYFFLSNLSLLDLCYTTSTVP. Residues 80–100 lie on the Extracellular side of the membrane; that stretch reads QMLVNICNTRKVISYGGCVAQ. Residues C97 and C189 are joined by a disulfide bond. A helical transmembrane segment spans residues 101-120; the sequence is LFIFLALGSTECLLLAVMCF. Residues 121–139 are Cytoplasmic-facing; sequence DRFVAICRPLHYSIIMHQR. The chain crosses the membrane as a helical span at residues 140–158; that stretch reads LCFQLAAASWISGFSNSVL. At 159-195 the chain is on the extracellular side; sequence QSTWTLKMPLCGHKEVDHFFCEVPALLKLSCVDTTAN. The chain crosses the membrane as a helical span at residues 196–219; that stretch reads EAELFFISVLFLLIPVTLILISYA. The Cytoplasmic portion of the chain corresponds to 220–236; the sequence is FIVQAVLRIQSAEGQRK. A helical membrane pass occupies residues 237-259; sequence AFGTCGSHLIVVSLFYGTAISMY. Topologically, residues 260 to 272 are extracellular; it reads LQPPSPSSKDRGK. A helical transmembrane segment spans residues 273 to 292; sequence MVSLFCGIIAPMLNPLIYTL. The Cytoplasmic segment spans residues 293 to 357; the sequence is RNKEVKEAFK…YCNLPQRKFP (65 aa).

The protein belongs to the G-protein coupled receptor 1 family.

It is found in the cell membrane. Its function is as follows. Odorant receptor. The protein is Olfactory receptor 2B2 (OR2B2) of Homo sapiens (Human).